Consider the following 267-residue polypeptide: Digeranylgeranylglyceryl phosphate synthase (267 aa).

A run of 7 helical transmembrane segments spans residues 10 to 30 (ANCVMAGAASLTGMLVSGALL), 33 to 53 (LHTPVLVFSAVLLITGGGNAI), 80 to 100 (AALIWSVALFIAGCLIAGLIN), 104 to 121 (LALALLNSFVLIIYAARL), 139 to 159 (TFLFGGLAASPSSITAFLSIL), 198 to 218 (VLASLVLIVAMLLSYLVPLGI), and 247 to 267 (QRWIKMGMGMALVAFLIGYHI).

It belongs to the UbiA prenyltransferase family. DGGGP synthase subfamily. Mg(2+) is required as a cofactor.

It localises to the cell membrane. It catalyses the reaction sn-3-O-(geranylgeranyl)glycerol 1-phosphate + (2E,6E,10E)-geranylgeranyl diphosphate = 2,3-bis-O-(geranylgeranyl)-sn-glycerol 1-phosphate + diphosphate. It participates in membrane lipid metabolism; glycerophospholipid metabolism. Prenyltransferase that catalyzes the transfer of the geranylgeranyl moiety of geranylgeranyl diphosphate (GGPP) to the C2 hydroxyl of (S)-3-O-geranylgeranylglyceryl phosphate (GGGP). This reaction is the second ether-bond-formation step in the biosynthesis of archaeal membrane lipids. This is Digeranylgeranylglyceryl phosphate synthase from Methanothrix thermoacetophila (strain DSM 6194 / JCM 14653 / NBRC 101360 / PT) (Methanosaeta thermophila).